Consider the following 244-residue polypeptide: 1-(5-phosphoribosyl)-5-[(5-phosphoribosylamino)methylideneamino] imidazole-4-carboxamide isomerase (244 aa).

Residue Asp9 is the Proton acceptor of the active site. Catalysis depends on Asp131, which acts as the Proton donor.

It belongs to the HisA/HisF family.

It is found in the cytoplasm. The catalysed reaction is 1-(5-phospho-beta-D-ribosyl)-5-[(5-phospho-beta-D-ribosylamino)methylideneamino]imidazole-4-carboxamide = 5-[(5-phospho-1-deoxy-D-ribulos-1-ylimino)methylamino]-1-(5-phospho-beta-D-ribosyl)imidazole-4-carboxamide. Its pathway is amino-acid biosynthesis; L-histidine biosynthesis; L-histidine from 5-phospho-alpha-D-ribose 1-diphosphate: step 4/9. The sequence is that of 1-(5-phosphoribosyl)-5-[(5-phosphoribosylamino)methylideneamino] imidazole-4-carboxamide isomerase from Campylobacter jejuni subsp. jejuni serotype O:6 (strain 81116 / NCTC 11828).